The primary structure comprises 249 residues: NADH dehydrogenase [ubiquinone] flavoprotein 2, mitochondrial (249 aa).

The N-terminal 32 residues, 1–32 (MFLSAALRARAAGLAAHWGKHIRNLHKTAVQN), are a transit peptide targeting the mitochondrion. An N6-acetyllysine modification is found at Lys-61. Residues Cys-135, Cys-140, Cys-176, and Cys-180 each coordinate [2Fe-2S] cluster. Tyr-193 is modified (phosphotyrosine; by SRC). A disordered region spans residues 213–249 (IPKPGPRSGRFSCEPAGGLTSLTEPPKGPGFGVQAGL).

This sequence belongs to the complex I 24 kDa subunit family. Core subunit of respiratory chain NADH dehydrogenase (Complex I) which is composed of 45 different subunits. This is a component of the flavoprotein-sulfur (FP) fragment of the enzyme. The cofactor is [2Fe-2S] cluster.

The protein resides in the mitochondrion inner membrane. It carries out the reaction a ubiquinone + NADH + 5 H(+)(in) = a ubiquinol + NAD(+) + 4 H(+)(out). In terms of biological role, core subunit of the mitochondrial membrane respiratory chain NADH dehydrogenase (Complex I) which catalyzes electron transfer from NADH through the respiratory chain, using ubiquinone as an electron acceptor. Parts of the peripheral arm of the enzyme, where the electrons from NADH are accepted by flavin mononucleotide (FMN) and then passed along a chain of iron-sulfur clusters by electron tunnelling to the final acceptor ubiquinone. Contains one iron-sulfur cluster. This is NADH dehydrogenase [ubiquinone] flavoprotein 2, mitochondrial (NDUFV2) from Bos taurus (Bovine).